Reading from the N-terminus, the 608-residue chain is 1-deoxy-D-xylulose-5-phosphate synthase (608 aa).

Residues H66 and 107-109 (GHA) contribute to the thiamine diphosphate site. A Mg(2+)-binding site is contributed by D138. Thiamine diphosphate contacts are provided by residues 139-140 (GA), N167, F277, and E350. N167 provides a ligand contact to Mg(2+).

This sequence belongs to the transketolase family. DXPS subfamily. As to quaternary structure, homodimer. The cofactor is Mg(2+). Requires thiamine diphosphate as cofactor.

It carries out the reaction D-glyceraldehyde 3-phosphate + pyruvate + H(+) = 1-deoxy-D-xylulose 5-phosphate + CO2. It functions in the pathway metabolic intermediate biosynthesis; 1-deoxy-D-xylulose 5-phosphate biosynthesis; 1-deoxy-D-xylulose 5-phosphate from D-glyceraldehyde 3-phosphate and pyruvate: step 1/1. Functionally, catalyzes the acyloin condensation reaction between C atoms 2 and 3 of pyruvate and glyceraldehyde 3-phosphate to yield 1-deoxy-D-xylulose-5-phosphate (DXP). The chain is 1-deoxy-D-xylulose-5-phosphate synthase from Thermotoga petrophila (strain ATCC BAA-488 / DSM 13995 / JCM 10881 / RKU-1).